The chain runs to 181 residues: Protein Syd (181 aa).

The protein belongs to the Syd family.

It localises to the cell inner membrane. In terms of biological role, interacts with the SecY protein in vivo. May bind preferentially to an uncomplexed state of SecY, thus functioning either as a chelating agent for excess SecY in the cell or as a regulatory factor that negatively controls the translocase function. This chain is Protein Syd, found in Klebsiella pneumoniae (strain 342).